The chain runs to 245 residues: Probable phosphatase YE2421 (245 aa).

Positions 7, 9, 15, 40, 73, 101, 131, 192, and 194 each coordinate Zn(2+).

The protein belongs to the PHP family. In terms of assembly, homotrimer. The cofactor is Zn(2+).

This is Probable phosphatase YE2421 from Yersinia enterocolitica serotype O:8 / biotype 1B (strain NCTC 13174 / 8081).